A 107-amino-acid chain; its full sequence is Precursor of CEP14 (107 aa).

The N-terminal stretch at 1-21 (MAVRLIPTIWLFIVFAVIVSA) is a signal peptide. Residues 22–92 (LPSLVSSRKL…GKLRSRHLST (71 aa)) constitute a propeptide that is removed on maturation. A glycan (N-linked (GlcNAc...) asparagine) is linked at Asn-39. The disordered stretch occupies residues 43-76 (REEEKSHMPHVTKTSTLSALPKGKIPNSTPSKKG). Hydroxyproline occurs at positions 101 and 103.

This sequence belongs to the C-terminally encoded plant signaling peptide (CEP) family. As to quaternary structure, interacts with CEP receptors (e.g. CEPR1 and CEPR2). Post-translationally, the mature small signaling peptide is generated by proteolytic processing of the longer precursor.

It localises to the secreted. Its subcellular location is the extracellular space. The protein resides in the apoplast. Functionally, extracellular signaling peptide that may regulate primary root growth rate and systemic nitrogen (N)-demand signaling. The protein is Precursor of CEP14 of Arabidopsis thaliana (Mouse-ear cress).